The chain runs to 136 residues: Nucleoside diphosphate kinase (136 aa).

Residues lysine 9, phenylalanine 57, arginine 85, threonine 91, arginine 102, and asparagine 112 each contribute to the ATP site. Histidine 115 functions as the Pros-phosphohistidine intermediate in the catalytic mechanism.

Belongs to the NDK family. In terms of assembly, homotetramer. Mg(2+) is required as a cofactor.

The protein resides in the cytoplasm. The enzyme catalyses a 2'-deoxyribonucleoside 5'-diphosphate + ATP = a 2'-deoxyribonucleoside 5'-triphosphate + ADP. The catalysed reaction is a ribonucleoside 5'-diphosphate + ATP = a ribonucleoside 5'-triphosphate + ADP. Its function is as follows. Major role in the synthesis of nucleoside triphosphates other than ATP. The ATP gamma phosphate is transferred to the NDP beta phosphate via a ping-pong mechanism, using a phosphorylated active-site intermediate. This is Nucleoside diphosphate kinase from Acetivibrio thermocellus (strain ATCC 27405 / DSM 1237 / JCM 9322 / NBRC 103400 / NCIMB 10682 / NRRL B-4536 / VPI 7372) (Clostridium thermocellum).